The following is a 603-amino-acid chain: MSFDAKAFLATLTELPGVYRMLDIGGNVLYVGKAKNLKKRVASYFRENLSSPRIAHMVSQIASIETTATRTEAEALLLENNLIKSLAPRYNILFRDDKSYPYIVLSKGKFPRLGFFRGNPDRKADYFGPYPSSWAVRDSIHLMQKMFRLRTCEDTVFSNRSRPCLLYQIKRCSGPCVGFISADDYAADIQLAAMFLLGKQQEVTRRLTKSMEEASAKLAFEQAAVFRDQIQSLHQVQEKQFVSSSKGEDVDVLVAIKEAGQLCVNLAMVRGGRHLGDRPFFPTNAADSEPSDACAAFIRQHYAAHPAPARILSYPLPSEDEAGETEVALAELAGRPVPVQEGRGATHKAWVEMAIQNARLAILAKNQATAQQEQRLAALQDALQLPEPIARIECFDISHTMGEATVASCVVYEGNRMKKSDYRRFNIRDIQAGDDYAAMRQAVSRRYDSIAGGEGTAPDLILIDGGKGQVSSAFSALADLGLTHLPMIGVAKGEERKPGLETLIFPEGREPLQLPPQHPALHLIQEIRDEAHRFAITGHRAQRGKARKTSKLESLPGIGPARRKALVARFGGLPGVLAASIDQLAEVPGVSREMAEKIHSALH.

Positions 14–92 constitute a GIY-YIG domain; sequence ELPGVYRMLD…IKSLAPRYNI (79 aa). The 36-residue stretch at 201–236 folds into the UVR domain; sequence QEVTRRLTKSMEEASAKLAFEQAAVFRDQIQSLHQV.

Belongs to the UvrC family. As to quaternary structure, interacts with UvrB in an incision complex.

Its subcellular location is the cytoplasm. The UvrABC repair system catalyzes the recognition and processing of DNA lesions. UvrC both incises the 5' and 3' sides of the lesion. The N-terminal half is responsible for the 3' incision and the C-terminal half is responsible for the 5' incision. The chain is UvrABC system protein C from Dechloromonas aromatica (strain RCB).